The following is a 467-amino-acid chain: Probable serine hydroxymethyltransferase, cytosolic (467 aa).

At K243 the chain carries N6-(pyridoxal phosphate)lysine.

It belongs to the SHMT family. Homotetramer. It depends on pyridoxal 5'-phosphate as a cofactor.

The protein localises to the cytoplasm. The enzyme catalyses (6R)-5,10-methylene-5,6,7,8-tetrahydrofolate + glycine + H2O = (6S)-5,6,7,8-tetrahydrofolate + L-serine. It participates in one-carbon metabolism; tetrahydrofolate interconversion. Interconversion of serine and glycine. This is Probable serine hydroxymethyltransferase, cytosolic from Schizosaccharomyces pombe (strain 972 / ATCC 24843) (Fission yeast).